A 1279-amino-acid polypeptide reads, in one-letter code: MSSTKWTDEQRQAIFTKNCNLLVAAGAGAGKTAVLVQRIIEKILDKEEPIDIDKLLVVTFTNAAAAEMRERIGDAISKGLDEDPESKVLRKQLTLLNKSNIMTIHSFCLQVIKNNFHTIEIDPNFRICDETEGILMKQEAIDELFDELYEIENEDFINLVESYASRKDIRLQEVVLELHRFAKSAPFPYTWLLNMAEGFNVGENFNFEETLWADMIMEDMKVLLHGFKNMLQQSIDVILNSEGIDYYYEPFKMDLSFINSLLEKSSFKEFRGEIIAYDFPKLPLKRNKDADKEAKERVKKLRDRVKKRIIELRITLNSYENEFTKKEFIFLYPSMKALSNLVILFDKKYEAKKRERDLIDFNDIEHLCLSILTDKNSEGHIIPSDIALNYRKKFAEVLIDEYQDSNLVQEVIMSMVSRVKGYWSFYNGQLIFNEEEINLEEPQIGLDIPNRFMVGDVKQSIYRFRQAKPEIFLDKYNEYSEEEGTKNRKVKLFKNFRSREEVINGVNYLFKQIMSKTIGELDYTEEEALKVGASYGEEVKGEPIELCLMDKKYEISEEVLKEYNVDEEEALDNIQLEGRLVAKKIQKLVGNNLEGGLKVFDRKLGEYRNLQYRDIVILMRATSNWAPVFVEELAKEGIPVFADTNSGYFDTAEIKTMISLLQIIDNPLQDIPLLSVLRSPIASFTDDELIDIRMVNKNITFYECMEIIYRLYKNEKLDSYYSFYIEDENKINKIIKDMNEKLKNKICSFIEKLKLWREKSIHIDIDEFIWFLYVETGYYGYAGALQAGEQRQANLRILFQRAKQYAKTSYKGLFNFINFINKLKFSSGDMGSAKILGENENVVRIMSIHKSKGLEFPVVILSGTGKNFNMMDLNKNILFHRDLGYGPDYVDTERRIAYPSLVKNIIKNKIRLETLSEEMRILYVALTRAREKLIITGLINNMDKTVEDWLNLSEDKNKVPEYAVMSGKTYLDWIGPALIKHKDAVSFREELKMTSELSNIVDDKSKWKIELWNKRELLKEKVEEDEVEISEKIKETLMNLEESDYKEEIYKRLSFKYKYDNASSIPTKLSVSDVKKQFILDEKENTEELFKKLELRKPMFMEEKKKISPSERGTIIHLFMQHLDLKKAENEEDIKEQINRLIEREFITYEQSKVISSYKILKFCRGELGKRILNSNNVNKEMPFSIEIPALEIYKELDKEIYKDEKLIIQGVIDCYFEEEDGLVLLDYKTDYVNDIEEIKNRYEIQIKYYEEALNRITGKNVKDKYLYLFSVDNYIKID.

The 496-residue stretch at 4 to 499 (TKWTDEQRQA…VKLFKNFRSR (496 aa)) folds into the UvrD-like helicase ATP-binding domain. Position 25–32 (25–32 (AGAGAGKT)) interacts with ATP. The region spanning 526-853 (EEALKVGASY…RIMSIHKSKG (328 aa)) is the UvrD-like helicase C-terminal domain.

The protein belongs to the helicase family. AddA subfamily. Heterodimer of AddA and AddB/RexB. The cofactor is Mg(2+).

It carries out the reaction Couples ATP hydrolysis with the unwinding of duplex DNA by translocating in the 3'-5' direction.. The catalysed reaction is ATP + H2O = ADP + phosphate + H(+). Its function is as follows. The heterodimer acts as both an ATP-dependent DNA helicase and an ATP-dependent, dual-direction single-stranded exonuclease. Recognizes the chi site generating a DNA molecule suitable for the initiation of homologous recombination. The AddA nuclease domain is required for chi fragment generation; this subunit has the helicase and 3' -&gt; 5' nuclease activities. In Clostridium botulinum (strain Kyoto / Type A2), this protein is ATP-dependent helicase/nuclease subunit A.